We begin with the raw amino-acid sequence, 39 residues long: Cygnin (39 aa).

At glutamine 1 the chain carries Pyrrolidone carboxylic acid. Intrachain disulfides connect cysteine 6–cysteine 33, cysteine 12–cysteine 28, and cysteine 16–cysteine 32.

Belongs to the transferrin family.

The polypeptide is Cygnin (Cygnus atratus (Black swan)).